We begin with the raw amino-acid sequence, 64 residues long: p7b (64 aa).

At 1–12 (MECVCVDSSWPQ) the chain is on the cytoplasmic side. The helical; Signal-anchor for type II membrane protein transmembrane segment at 13–30 (WLRNLILGILISSILFIL) threads the bilayer. Over 31-64 (TKTQDTVAVYHEPSVYSIDQTQKFQKIDIHNGGK) the chain is Lumenal.

The protein belongs to the gammacarmovirus double gene block protein 2 family.

The protein resides in the host endoplasmic reticulum membrane. Functionally, required for cell-to-cell movement of virions in the host plant together with p7a. In Maize chlorotic mottle virus (isolate United States/Kansas/1987) (MCMV), this protein is p7b.